A 113-amino-acid polypeptide reads, in one-letter code: Protein ORF3 (113 aa).

Hydrophobic regions lie at residues 1-21 and 32-52; these read MGSP…CLCC and AVVG…GLIL. The interaction with host HPX stretch occupies residues 27–67; sequence ASRLAAVVGGATAVPAVVSGVTGLILSPSPSPIFIQPTPSL. The interaction with the capsid protein stretch occupies residues 47–71; the sequence is VTGLILSPSPSPIFIQPTPSLPMSF. Phosphoserine; by host is present on S70. Residues 71–113 form a homodimerization, and interaction with host AMBP/bikunin region; it reads FHNPGLELALDSRPAPLAPLGVTSPSAPPLPPVVDLPQLGLRR. The disordered stretch occupies residues 89 to 113; it reads PLGVTSPSAPPLPPVVDLPQLGLRR. The interval 94 to 103 is interaction with host SRC, HCK, FYN, PIK3R3 and GRB2; it reads SPSAPPLPPV. The PTAP/PSAP motif signature appears at 95–98; sequence PSAP.

Belongs to the hepevirus ORF3 protein family. As to quaternary structure, forms homooligomers. Interacts with host SRC, HCK, FYN, PIK3R3 and GRB2 (via SH3 domain); binding does not activate the kinases. Interacts with host AMBP/bikunin and AMBP/alpha-1-microglobulin peptides. Interacts with host HPX/hemopexin. Interacts (when phosphorylated) with capsid protein ORF2. Interacts with host TSG101; this interaction plays a role in viral release from the host cell. Interacts with host SIRPA; this interaction down-regulates the phosphorylation of host IRF3. Palmitoylated in the N-terminus.

It localises to the host endoplasmic reticulum membrane. Its subcellular location is the host cytoplasm. The protein resides in the host cytoskeleton. The protein localises to the virion. It is found in the host cell membrane. In terms of biological role, small multifunctional phosphoprotein involved in virion morphogenesis, egress and counteracting host innate immunity. Plays critical roles in the final steps of viral release by interacting with host TSG101, a member of the vacuolar protein-sorting pathway and using other cellular host proteins involved in vesicle formation pathway. Also acts as a viroporin and forms ion conductive pores allowing viral particle release. Impairs the generation of type I interferon by down-regulating host TLR3 and TLR7 as well as their downstream signaling pathways. Down-regulates the phosphorylation of host IRF3 via the interaction with host SIRP-alpha, thereby inhibiting IFN-I expression. Interacts with host microtubules. This Bandicota bengalensis (lesser bandicoot rat) protein is Protein ORF3.